A 1167-amino-acid polypeptide reads, in one-letter code: ATP-dependent helicase/deoxyribonuclease subunit B (1167 aa).

The region spanning 1–359 is the UvrD-like helicase ATP-binding domain; the sequence is MSLRFLLGRS…IRQTEAYRDL (359 aa). ATP is bound at residue 8-15; sequence GRSGSGKT. Residues 282–588 enclose the UvrD-like helicase C-terminal domain; sequence ANRRHEDRAL…EFSLVPPAMD (307 aa). Positions 804, 1126, 1129, and 1135 each coordinate [4Fe-4S] cluster.

Belongs to the helicase family. AddB/RexB type 1 subfamily. As to quaternary structure, heterodimer of AddA and AddB. It depends on Mg(2+) as a cofactor. [4Fe-4S] cluster is required as a cofactor.

In terms of biological role, the heterodimer acts as both an ATP-dependent DNA helicase and an ATP-dependent, dual-direction single-stranded exonuclease. Recognizes the chi site generating a DNA molecule suitable for the initiation of homologous recombination. The AddB subunit has 5' -&gt; 3' nuclease activity but not helicase activity. This chain is ATP-dependent helicase/deoxyribonuclease subunit B, found in Geobacillus kaustophilus (strain HTA426).